The sequence spans 645 residues: Aminopeptidase P1 (645 aa).

N-acetylserine is present on S2. Residues R69 and H420 each coordinate a peptide. 3 residues coordinate Mn(2+): D440, D451, and H514. A peptide is bound by residues H514, H523, and E549. Mn(2+)-binding residues include E549 and E563.

This sequence belongs to the peptidase M24B family. Homodimer. Interacts with N-1-naphthylphthalamic acid (NPA). Requires Mn(2+) as cofactor. Zn(2+) is required as a cofactor. Post-translationally, glycosylated. Also present in a non-glycosylated form. Ubiquitous with preferential expression in 5 days-old seedlings, roots, flowers, inflorescences and rosette leaves (at protein levels).

Its subcellular location is the cytoplasm. It is found in the cell membrane. The protein resides in the microsome membrane. The catalysed reaction is Release of any N-terminal amino acid, including proline, that is linked to proline, even from a dipeptide or tripeptide.. With respect to regulation, inhibited by EGTA and apstatin, and, to some extent, by the flavonoid kaempferol. In terms of biological role, catalyzes the removal of a penultimate prolyl residue from the N-termini of peptides, such as Arg-Pro-Pro. Aminopeptidase that binds to the auxin transport inhibitor N-1-naphthylphthalamic acid (NPA). May play a negative role in the regulation of PIN auxin transport proteins. The protein is Aminopeptidase P1 of Arabidopsis thaliana (Mouse-ear cress).